A 176-amino-acid polypeptide reads, in one-letter code: Co-chaperone protein HscB (176 aa).

In terms of domain architecture, J spans 2 to 74 (DYFTLFGLPA…LMRAEYLLSL (73 aa)).

It belongs to the HscB family. In terms of assembly, interacts with HscA and stimulates its ATPase activity. Interacts with IscU.

Functionally, co-chaperone involved in the maturation of iron-sulfur cluster-containing proteins. Seems to help targeting proteins to be folded toward HscA. This is Co-chaperone protein HscB from Escherichia coli O7:K1 (strain IAI39 / ExPEC).